Reading from the N-terminus, the 223-residue chain is UPF0502 protein Sbal_1765 (223 aa).

Belongs to the UPF0502 family.

This Shewanella baltica (strain OS155 / ATCC BAA-1091) protein is UPF0502 protein Sbal_1765.